The primary structure comprises 381 residues: Creatine kinase B-type (381 aa).

Ser4 is modified (phosphoserine). In terms of domain architecture, Phosphagen kinase N-terminal spans 11 to 98; it reads KLRFPAEDEF…FDPIIEDRHG (88 aa). Thr35 is modified (phosphothreonine). A Glycyl lysine isopeptide (Lys-Gly) (interchain with G-Cter in ubiquitin) cross-link involves residue Lys45. Creatine is bound at residue Val72. Over residues 96 to 110 the composition is skewed to basic and acidic residues; sequence RHGGYQPSDEHKTDL. The interval 96–122 is disordered; the sequence is RHGGYQPSDEHKTDLNPDNLQGGDDLD. Residue Lys107 forms a Glycyl lysine isopeptide (Lys-Gly) (interchain with G-Cter in ubiquitin) linkage. The residue at position 125 (Tyr125) is a Phosphotyrosine. The 243-residue stretch at 125–367 folds into the Phosphagen kinase C-terminal domain; that stretch reads YVLSSRVRTG…KLLIEMEQRL (243 aa). ATP-binding positions include 128 to 132, Arg130, Arg132, and His191; that span reads SSRVR. The segment at 130 to 138 is internal MTS-like signal; that stretch reads RVRTGRSIR. Phosphoserine is present on Ser199. Glu232 lines the creatine pocket. Arg236 provides a ligand contact to ATP. Tyr269 is subject to 3'-nitrotyrosine. Ser285 provides a ligand contact to creatine. Arg292 serves as a coordination point for ATP. Ser309 carries the phosphoserine modification. Residues Arg320, 320–325, and Asp335 contribute to the ATP site; that span reads RGTGGV. Thr322 carries the phosphothreonine modification. A Glycyl lysine isopeptide (Lys-Gly) (interchain with G-Cter in ubiquitin) cross-link involves residue Lys381.

It belongs to the ATP:guanido phosphotransferase family. In terms of assembly, dimer of identical or non-identical chains, which can be either B (brain type) or M (muscle type). With MM being the major form in skeletal muscle and myocardium, MB existing in myocardium, and BB existing in many tissues, especially brain. Interacts with SLC12A6 (via C-terminus); the interaction may be required for SLC12A6 potassium-chloride cotransport activity. In terms of processing, ubiquitinated by the ECS(ASB9) complex, leading to its degradation by the proteasome. In terms of tissue distribution, in the kidney localized primarily in the outer medulla in the thick ascending limb and distal convoluted tubule.

It localises to the cytoplasm. It is found in the cytosol. The protein resides in the mitochondrion. Its subcellular location is the cell membrane. The enzyme catalyses creatine + ATP = N-phosphocreatine + ADP + H(+). Its function is as follows. Reversibly catalyzes the transfer of phosphate between ATP and various phosphogens (e.g. creatine phosphate). Creatine kinase isoenzymes play a central role in energy transduction in tissues with large, fluctuating energy demands, such as skeletal muscle, heart, brain and spermatozoa. Acts as a key regulator of adaptive thermogenesis as part of the futile creatine cycle: localizes to the mitochondria of thermogenic fat cells and acts by mediating phosphorylation of creatine to initiate a futile cycle of creatine phosphorylation and dephosphorylation. During the futile creatine cycle, creatine and N-phosphocreatine are in a futile cycle, which dissipates the high energy charge of N-phosphocreatine as heat without performing any mechanical or chemical work. The protein is Creatine kinase B-type (Ckb) of Rattus norvegicus (Rat).